We begin with the raw amino-acid sequence, 359 residues long: E3 ubiquitin-protein ligase RNF146 (359 aa).

The RING-type zinc finger occupies 37 to 75; sequence CAICLQTCVHPVSLPCKHVFCYLCVKGASWLGKRCALCR. Glycyl lysine isopeptide (Lys-Gly) (interchain with G-Cter in ubiquitin) cross-links involve residues Lys85 and Lys95. In terms of domain architecture, WWE spans 92–168; that stretch reads EELKAASRGN…EHGRRRKIKR (77 aa). Residues Tyr108, Arg111, and Trp115 each contribute to the a glycoprotein site. Lys131 participates in a covalent cross-link: Glycyl lysine isopeptide (Lys-Gly) (interchain with G-Cter in ubiquitin). The a glycoprotein site is built by Tyr145, Gln154, Arg164, and Lys176. Residue Lys176 forms a Glycyl lysine isopeptide (Lys-Gly) (interchain with G-Cter in ubiquitin) linkage. The tract at residues 254–359 is disordered; it reads GDNTAERSHR…PDGQCTVTEV (106 aa). The span at 284-298 shows a compositional bias: acidic residues; sequence SIEETESDASSDSED. Residues Ser290 and Ser294 each carry the phosphoserine modification. Polar residues predominate over residues 306–323; sequence HSLTQQRLLVSNANQTVP.

As to quaternary structure, can form homooligomers. Interacts with PARsylated AXIN1, AXIN2, BLZF1, CASC3, H1-2, IPO7, LIG3, NCL, PARP1, XRCC1, XRCC5 and XRCC6. Interacts with DDB1, DHX15, IQGAP1, LRPPRC, PARP2, PRKDC, RUVBL2, TNKS1 and TNKS2. Binding often leads to interactor ubiquitination, in the presence of the appropriate E1 and E2 enzymes, and proteasomal degradation. Post-translationally, ubiquitinated; autoubiquitinated. Polyubiquitinated in the presence of UBE2D1, UBE2D2 and UBE2D3. Multimonoubiquitinated in the presence of UBE2E1. Not ubiquitinated in the presence of UBE2H, CDC34, UBE2L3, UBE2L6, nor UBE2C. In the absence of PAR, autoubiquitination occurs on Lys-85, Lys-95 and Lys-176 via 'Lys-11' and 'Lys-48' ubiquitin linkages. In the presence of PAR, Lys-131 and Lys-176 are ubiquitinated via 'Lys-6', 'Lys-33' and 'Lys-48' ubiquitin linkages. Autoubiquitination is enhanced upon PAR-binding. As to expression, ubiquitously expressed. Up-regulated in brains from patients with Alzheimer disease.

It localises to the cytoplasm. Its subcellular location is the cytosol. It is found in the nucleus. The catalysed reaction is S-ubiquitinyl-[E2 ubiquitin-conjugating enzyme]-L-cysteine + [acceptor protein]-L-lysine = [E2 ubiquitin-conjugating enzyme]-L-cysteine + N(6)-ubiquitinyl-[acceptor protein]-L-lysine.. It participates in protein modification; protein ubiquitination. E3 ubiquitin-protein ligase that specifically binds poly-ADP-ribosylated (PARsylated) proteins and mediates their ubiquitination and subsequent degradation. May regulate many important biological processes, such as cell survival and DNA damage response. Acts as an activator of the Wnt signaling pathway by mediating the ubiquitination of PARsylated AXIN1 and AXIN2, 2 key components of the beta-catenin destruction complex. Acts in cooperation with tankyrase proteins (TNKS and TNKS2), which mediate PARsylation of target proteins AXIN1, AXIN2, BLZF1, CASC3, TNKS and TNKS2. Recognizes and binds tankyrase-dependent PARsylated proteins via its WWE domain and mediates their ubiquitination, leading to their degradation. Different ubiquitin linkage types have been observed: TNKS2 undergoes ubiquitination at 'Lys-48' and 'Lys-63', while AXIN1 is only ubiquitinated at 'Lys-48'. May regulate TNKS and TNKS2 subcellular location, preventing aggregation at a centrosomal location. Neuroprotective protein. Protects the brain against N-methyl-D-aspartate (NMDA) receptor-mediated glutamate excitotoxicity and ischemia, by interfering with PAR-induced cell death, called parthanatos. Prevents nuclear translocation of AIFM1 in a PAR-binding dependent manner. Does not affect PARP1 activation. Protects against cell death induced by DNA damaging agents, such as N-methyl-N-nitro-N-nitrosoguanidine (MNNG) and rescues cells from G1 arrest. Promotes cell survival after gamma-irradiation. Facilitates DNA repair. This chain is E3 ubiquitin-protein ligase RNF146 (RNF146), found in Homo sapiens (Human).